The chain runs to 299 residues: MTNIIFSLQPTFTQGLILGQLSVLVLLGLILKYLFLDSTKNPFETTSYHPQFDRKPARKQQAQDSQSQSEIDDVESLDWFNLLLQQVANVYRSKLRGDLAGAEGDETARQRIEAFANKIRPAGFLDLIKIHSVDLGAGAPTLFNARIRESDPNDPDSPPEIEFDAVYEDTLSLSLSTSYLFNYPTASFARLPISLTISLSQFKSSIRVIPPTPDSVAPVLTFTISPDFVLDLTTTSLMGSRAKLANVPKLHELIQHQVRRVLGGRATWKVVLPGLASVAEAKQQVLKQEQEESKRQEEA.

The Lumenal segment spans residues 1 to 15; it reads MTNIIFSLQPTFTQG. A helical membrane pass occupies residues 16-36; sequence LILGQLSVLVLLGLILKYLFL. Residues 37–299 are Cytoplasmic-facing; sequence DSTKNPFETT…QEESKRQEEA (263 aa). Positions 47 to 68 are disordered; sequence SYHPQFDRKPARKQQAQDSQSQ. Positions 73–281 constitute an SMP-LTD domain; that stretch reads DVESLDWFNL…LPGLASVAEA (209 aa).

Belongs to the MMM1 family. Homodimer. Component of the ER-mitochondria encounter structure (ERMES) or MDM complex, composed of MMM1, MDM10, MDM12 and MDM34. An MMM1 homodimer associates with one molecule of MDM12 on each side in a pairwise head-to-tail manner, and the SMP-LTD domains of MMM1 and MDM12 generate a continuous hydrophobic tunnel for phospholipid trafficking.

The protein localises to the endoplasmic reticulum membrane. In terms of biological role, component of the ERMES/MDM complex, which serves as a molecular tether to connect the endoplasmic reticulum (ER) and mitochondria. Components of this complex are involved in the control of mitochondrial shape and protein biogenesis, and function in nonvesicular lipid trafficking between the ER and mitochondria. The MDM12-MMM1 subcomplex functions in the major beta-barrel assembly pathway that is responsible for biogenesis of all outer membrane beta-barrel proteins, and acts in a late step after the SAM complex. The MDM10-MDM12-MMM1 subcomplex further acts in the TOM40-specific pathway after the action of the MDM12-MMM1 complex. Essential for establishing and maintaining the structure of mitochondria and maintenance of mtDNA nucleoids. This Coprinopsis cinerea (strain Okayama-7 / 130 / ATCC MYA-4618 / FGSC 9003) (Inky cap fungus) protein is Maintenance of mitochondrial morphology protein 1.